The primary structure comprises 345 residues: METFVRLFKDSPQQRSDAWHAIRRTQVGGSDLASVLGLNPYKSYYIILAEKANLFKKNLNRAACSWGTLFERVSKDLLELFCQTTVIGDNIHIDGTYLGYPGHSNSPDGFCHLTLGYTQQSWEIKTIFNNVRYEATKRIPVLVEIKSPFNRKIKNSVPSYYMPQIQSGLALSPPISMGIYVEAMFRVCGIHQLGSNNETNTDIHPPESMLPLAWGIITICSTQEHTEAPQDFGTLDAETFRQLLETLYQKDQYTIHYSMPYETACPEMPNVVGYFGWKVFIFQIIPVMKHPQFLKDKYPIIQQFLRDLHTIKASPSPMETYEKICCSEESALSTEDIDNFTDMLT.

The protein belongs to the asfivirus D345L family. In terms of assembly, interacts with IKKA/CHUK and IKBKB.

The protein resides in the host cytoplasm. Functionally, plays a role in the negative regulation of host NF-kappa-B signaling pathway. Mechanistically, recruits host IKKA/CHUK and IKBKB to suppress their kinase activity towards NFKBIA. This chain is Protein D345L, found in African swine fever virus (strain Badajoz 1971 Vero-adapted) (Ba71V).